A 145-amino-acid chain; its full sequence is D-aminoacyl-tRNA deacylase (145 aa).

Positions 137–138 match the Gly-cisPro motif, important for rejection of L-amino acids motif; the sequence is GP.

Belongs to the DTD family. Homodimer.

Its subcellular location is the cytoplasm. It carries out the reaction glycyl-tRNA(Ala) + H2O = tRNA(Ala) + glycine + H(+). It catalyses the reaction a D-aminoacyl-tRNA + H2O = a tRNA + a D-alpha-amino acid + H(+). An aminoacyl-tRNA editing enzyme that deacylates mischarged D-aminoacyl-tRNAs. Also deacylates mischarged glycyl-tRNA(Ala), protecting cells against glycine mischarging by AlaRS. Acts via tRNA-based rather than protein-based catalysis; rejects L-amino acids rather than detecting D-amino acids in the active site. By recycling D-aminoacyl-tRNA to D-amino acids and free tRNA molecules, this enzyme counteracts the toxicity associated with the formation of D-aminoacyl-tRNA entities in vivo and helps enforce protein L-homochirality. This chain is D-aminoacyl-tRNA deacylase, found in Ectopseudomonas mendocina (strain ymp) (Pseudomonas mendocina).